We begin with the raw amino-acid sequence, 198 residues long: Prolactin (198 aa).

3 cysteine pairs are disulfide-bonded: C4–C11, C58–C173, and C190–C198.

This sequence belongs to the somatotropin/prolactin family. Pituitary gland.

Its subcellular location is the secreted. The protein is Prolactin of Chelonia mydas (Green sea-turtle).